Consider the following 477-residue polypeptide: Ketoisovalerate oxidoreductase subunit VorA (477 aa).

In terms of assembly, heterotrimer of the VorA, VorB and VorC subunits.

The enzyme catalyses 3-methyl-2-oxobutanoate + 2 oxidized [2Fe-2S]-[ferredoxin] + CoA = 2-methylpropanoyl-CoA + 2 reduced [2Fe-2S]-[ferredoxin] + CO2 + H(+). The protein is Ketoisovalerate oxidoreductase subunit VorA (vorA) of Methanothermobacter thermautotrophicus (strain ATCC 29096 / DSM 1053 / JCM 10044 / NBRC 100330 / Delta H) (Methanobacterium thermoautotrophicum).